Consider the following 32-residue polypeptide: U3-cyrtautoxin-As1a (32 aa).

3 disulfides stabilise this stretch: cysteine 4-cysteine 19, cysteine 11-cysteine 24, and cysteine 18-cysteine 29.

This sequence belongs to the neurotoxin 14 (magi-1) family. To aptotoxin III. Expressed by the venom gland.

The protein localises to the secreted. Is both paralytic and lethal, when injected into lepidopteran larvae. Is a slower acting toxin, being lethal at 24 hours, but not paralytic at 1 hour post-injection. This is U3-cyrtautoxin-As1a from Apomastus schlingeri (Trap-door spider).